The chain runs to 332 residues: Protein FAM131B (332 aa).

The segment at 1 to 22 (MDSTSSLHGSSLHRPSTEQTRT) is disordered. 3 positions are modified to phosphoserine: serine 47, serine 114, and serine 117. The tract at residues 221–332 (LGPAFDDSQP…FDEEEGDANN (112 aa)) is disordered. 2 stretches are compositionally biased toward basic and acidic residues: residues 272–281 (PVEEEKRPLA) and 288–302 (AGCR…REDP). Phosphoserine occurs at positions 295, 297, and 313. Threonine 316 is modified (phosphothreonine). Phosphoserine is present on residues serine 317, serine 318, and serine 322. Positions 323–332 (FDEEEGDANN) are enriched in acidic residues.

Belongs to the FAM131 family.

The sequence is that of Protein FAM131B (Fam131b) from Rattus norvegicus (Rat).